We begin with the raw amino-acid sequence, 121 residues long: Small ribosomal subunit protein uS13 (121 aa).

A disordered region spans residues 93–121 (RKGLPVRGQKTKTNARTRKGKRKTVGAKS).

It belongs to the universal ribosomal protein uS13 family. In terms of assembly, part of the 30S ribosomal subunit. Forms a loose heterodimer with protein S19. Forms two bridges to the 50S subunit in the 70S ribosome.

Located at the top of the head of the 30S subunit, it contacts several helices of the 16S rRNA. In the 70S ribosome it contacts the 23S rRNA (bridge B1a) and protein L5 of the 50S subunit (bridge B1b), connecting the 2 subunits; these bridges are implicated in subunit movement. Contacts the tRNAs in the A and P-sites. This is Small ribosomal subunit protein uS13 from Campylobacter lari (strain RM2100 / D67 / ATCC BAA-1060).